Reading from the N-terminus, the 37-residue chain is Cytochrome b6-f complex subunit 5 (37 aa).

A helical membrane pass occupies residues 5 to 25 (LLSGIVLGLIPITLVGLFVTA).

The protein belongs to the PetG family. The 4 large subunits of the cytochrome b6-f complex are cytochrome b6, subunit IV (17 kDa polypeptide, PetD), cytochrome f and the Rieske protein, while the 4 small subunits are PetG, PetL, PetM and PetN. The complex functions as a dimer.

The protein resides in the plastid. The protein localises to the chloroplast thylakoid membrane. Its function is as follows. Component of the cytochrome b6-f complex, which mediates electron transfer between photosystem II (PSII) and photosystem I (PSI), cyclic electron flow around PSI, and state transitions. PetG is required for either the stability or assembly of the cytochrome b6-f complex. The polypeptide is Cytochrome b6-f complex subunit 5 (Welwitschia mirabilis (Tree tumbo)).